The following is a 220-amino-acid chain: Uracil-DNA glycosylase 1 (220 aa).

Asp65 acts as the Proton acceptor in catalysis.

It belongs to the uracil-DNA glycosylase (UDG) superfamily. UNG family.

The protein localises to the cytoplasm. The enzyme catalyses Hydrolyzes single-stranded DNA or mismatched double-stranded DNA and polynucleotides, releasing free uracil.. Its function is as follows. Excises uracil residues from the DNA which can arise as a result of misincorporation of dUMP residues by DNA polymerase or due to deamination of cytosine. The polypeptide is Uracil-DNA glycosylase 1 (Bacteroides fragilis (strain YCH46)).